Reading from the N-terminus, the 189-residue chain is uncharacterized protein (189 aa).

The protein belongs to the isochorismatase family.

This is an uncharacterized protein from Bacillus subtilis (strain 168).